The sequence spans 318 residues: MKPLDRIHEAAKALDRHIILPEGEDPRVAEAARRLLAAGLARVTLMGGPEIPGAGRIDPAGGPDLAELADHWHRMRAARGMTAERALTEMRDPIRQAAMRVRLGQADGTVGGAVATTADTVRAALQIIGKAPGAGIVSSFFLMLSCGPGAPVRGGMIFADCGLVIQPDARELAAIALSAADSCRRILAEEPRVALLSFSTAGSAEHPSLGRIREALALIRAAAPGLEVDGEMQFDAALDEAIRARKAPESPLTGRPNVFVFPDLADGNIGYKIAERLAGLTAIGPILQGLAKPANDLSRACSVKDIVNATAITAMQTK.

Belongs to the phosphate acetyltransferase and butyryltransferase family.

It localises to the cytoplasm. It catalyses the reaction acetyl-CoA + phosphate = acetyl phosphate + CoA. The protein operates within metabolic intermediate biosynthesis; acetyl-CoA biosynthesis; acetyl-CoA from acetate: step 2/2. In Paracoccus denitrificans, this protein is Phosphate acetyltransferase (pta).